The following is a 201-amino-acid chain: MCRTLATFPNTCLERAKEFKTRLGIFLHKSELSSDTGGISKFEWASKHNKERSFSEDVLGWRESFDLLLNSKNGVAAFHAFLKTEFSEENLEFWLACEEFKKIRSATKLASRAHHIFDEYIRSEAPKEVNIDHETRELTKTNLQAATTSCFDVAQGKTRTLMEKDSYPRFLKSPAYRDLAAQASATSTSAPSGSPAEPSHT.

2 S-palmitoyl cysteine lipidation sites follow: C2 and C12. One can recognise an RGS domain in the interval 64 to 180 (SFDLLLNSKN…LKSPAYRDLA (117 aa)). Y167 bears the Phosphotyrosine; by EGFR mark. Phosphotyrosine is present on Y176. The segment at 181-201 (AQASATSTSAPSGSPAEPSHT) is disordered.

As to quaternary structure, interacts with GNAI1 and GNAQ. Interacts with GNAI3, GNAI3 and GNAO1. Palmitoylated on Cys-2 and/or Cys-12. Post-translationally, phosphorylated. Phosphorylation at Tyr-167 by EGFR enhances GTPase accelerating (GAP) activity toward GNAI1. As to expression, retinal; also predominantly expressed in the liver and pituitary.

The protein resides in the membrane. In terms of biological role, regulates G protein-coupled receptor signaling cascades. Inhibits signal transduction by increasing the GTPase activity of G protein alpha subunits, thereby driving them into their inactive GDP-bound form. Plays an important role in the phototransduction cascade by regulating the lifetime and effective concentration of activated transducin alpha. May regulate extra and intracellular mitogenic signals. The chain is Regulator of G-protein signaling 16 (Rgs16) from Mus musculus (Mouse).